Reading from the N-terminus, the 407-residue chain is Proteasome-activating nucleotidase (407 aa).

The stretch at 22 to 67 forms a coiled coil; the sequence is KEKTQIAELESKVLRLELKNKDVTRENVQIKKENEILKRELDKLRI. ATP is bound by residues 192–197 and His331; that span reads GTGKTL. A docks into pockets in the proteasome alpha-ring to cause gate opening region spans residues 405–407; the sequence is MYG.

It belongs to the AAA ATPase family. As to quaternary structure, homohexamer. The hexameric complex has a two-ring architecture resembling a top hat that caps the 20S proteasome core at one or both ends. Upon ATP-binding, the C-terminus of PAN interacts with the alpha-rings of the proteasome core by binding to the intersubunit pockets.

The protein resides in the cytoplasm. Its function is as follows. ATPase which is responsible for recognizing, binding, unfolding and translocation of substrate proteins into the archaeal 20S proteasome core particle. Is essential for opening the gate of the 20S proteasome via an interaction with its C-terminus, thereby allowing substrate entry and access to the site of proteolysis. Thus, the C-termini of the proteasomal ATPase function like a 'key in a lock' to induce gate opening and therefore regulate proteolysis. Unfolding activity requires energy from ATP hydrolysis, whereas ATP binding alone promotes ATPase-20S proteasome association which triggers gate opening, and supports translocation of unfolded substrates. In Methanococcus maripaludis (strain C7 / ATCC BAA-1331), this protein is Proteasome-activating nucleotidase.